The following is a 249-amino-acid chain: Aquaporin TIP4-1 (249 aa).

Met-1 is modified (N-acetylmethionine). Residues 1–20 (MKKIELGHHSEAAKPDCIKA) are Cytoplasmic-facing. Position 3 is an N6,N6-dimethyllysine (Lys-3). The helical transmembrane segment at 21–41 (LIVEFITTFLFVFAGVGSAMA) threads the bilayer. The Vacuolar segment spans residues 42 to 49 (TDSLVGNT). Residues 50–70 (LVGLFAVAVAHAFVVAVMISA) form a helical membrane-spanning segment. Topologically, residues 71 to 105 (GHISGGHLNPAVTLGLLLGGHISVFRAFLYWIDQL) are cytoplasmic. An NPA 1 motif is present at residues 79–81 (NPA). The chain crosses the membrane as a helical span at residues 106–126 (LASSAACFLLSYLTGGMGTPV). Residues 127–137 (HTLASGVSYTQ) lie on the Vacuolar side of the membrane. The helical transmembrane segment at 138-158 (GIIWEIILTFSLLFTVYATIV) threads the bilayer. At 159–166 (DPKKGSLD) the chain is on the cytoplasmic side. Residues 167–187 (GFGPLLTGFVVGANILAGGAF) form a helical membrane-spanning segment. Residues 188–212 (SGASMNPARSFGPALVSGNWTDHWV) lie on the Vacuolar side of the membrane. The NPA 2 motif lies at 193–195 (NPA). Residues 213 to 233 (YWVGPLIGGGLAGFIYENVLI) form a helical membrane-spanning segment. The Cytoplasmic portion of the chain corresponds to 234–249 (DRPHVPVADDEQPLLN).

This sequence belongs to the MIP/aquaporin (TC 1.A.8) family. TIP (TC 1.A.8.10) subfamily. As to expression, expressed in roots.

Its subcellular location is the vacuole membrane. Functionally, aquaporins facilitate the transport of water and small neutral solutes across cell membranes. Transports urea in yeast cells in a pH-independent manner. This Arabidopsis thaliana (Mouse-ear cress) protein is Aquaporin TIP4-1 (TIP4-1).